We begin with the raw amino-acid sequence, 1037 residues long: uncharacterized protein (1037 aa).

This is an uncharacterized protein from Saccharomyces cerevisiae (strain ATCC 204508 / S288c) (Baker's yeast).